The following is a 345-amino-acid chain: UDP-3-O-acylglucosamine N-acyltransferase (345 aa).

Residue His-248 is the Proton acceptor of the active site.

This sequence belongs to the transferase hexapeptide repeat family. LpxD subfamily. Homotrimer.

It carries out the reaction a UDP-3-O-[(3R)-3-hydroxyacyl]-alpha-D-glucosamine + a (3R)-hydroxyacyl-[ACP] = a UDP-2-N,3-O-bis[(3R)-3-hydroxyacyl]-alpha-D-glucosamine + holo-[ACP] + H(+). Its pathway is bacterial outer membrane biogenesis; LPS lipid A biosynthesis. Its function is as follows. Catalyzes the N-acylation of UDP-3-O-acylglucosamine using 3-hydroxyacyl-ACP as the acyl donor. Is involved in the biosynthesis of lipid A, a phosphorylated glycolipid that anchors the lipopolysaccharide to the outer membrane of the cell. The chain is UDP-3-O-acylglucosamine N-acyltransferase from Prochlorococcus marinus (strain SARG / CCMP1375 / SS120).